Reading from the N-terminus, the 456-residue chain is Na(+)-translocating NADH-quinone reductase subunit A (456 aa).

The protein belongs to the NqrA family. As to quaternary structure, composed of six subunits; NqrA, NqrB, NqrC, NqrD, NqrE and NqrF.

It catalyses the reaction a ubiquinone + n Na(+)(in) + NADH + H(+) = a ubiquinol + n Na(+)(out) + NAD(+). Its function is as follows. NQR complex catalyzes the reduction of ubiquinone-1 to ubiquinol by two successive reactions, coupled with the transport of Na(+) ions from the cytoplasm to the periplasm. NqrA to NqrE are probably involved in the second step, the conversion of ubisemiquinone to ubiquinol. This is Na(+)-translocating NADH-quinone reductase subunit A from Rhodopirellula baltica (strain DSM 10527 / NCIMB 13988 / SH1).